A 259-amino-acid chain; its full sequence is 4-hydroxy-tetrahydrodipicolinate reductase (259 aa).

NAD(+) is bound by residues glycine 8–methionine 13, glycine 94–threonine 96, and alanine 120–phenylalanine 123. The active-site Proton donor/acceptor is the histidine 150. Histidine 151 provides a ligand contact to (S)-2,3,4,5-tetrahydrodipicolinate. The active-site Proton donor is lysine 154. Glycine 160–threonine 161 lines the (S)-2,3,4,5-tetrahydrodipicolinate pocket.

Belongs to the DapB family.

The protein resides in the cytoplasm. The enzyme catalyses (S)-2,3,4,5-tetrahydrodipicolinate + NAD(+) + H2O = (2S,4S)-4-hydroxy-2,3,4,5-tetrahydrodipicolinate + NADH + H(+). The catalysed reaction is (S)-2,3,4,5-tetrahydrodipicolinate + NADP(+) + H2O = (2S,4S)-4-hydroxy-2,3,4,5-tetrahydrodipicolinate + NADPH + H(+). It functions in the pathway amino-acid biosynthesis; L-lysine biosynthesis via DAP pathway; (S)-tetrahydrodipicolinate from L-aspartate: step 4/4. Catalyzes the conversion of 4-hydroxy-tetrahydrodipicolinate (HTPA) to tetrahydrodipicolinate. The sequence is that of 4-hydroxy-tetrahydrodipicolinate reductase from Limosilactobacillus fermentum (strain NBRC 3956 / LMG 18251) (Lactobacillus fermentum).